The chain runs to 37 residues: Large ribosomal subunit protein bL36 (37 aa).

It belongs to the bacterial ribosomal protein bL36 family.

This Shewanella woodyi (strain ATCC 51908 / MS32) protein is Large ribosomal subunit protein bL36.